A 103-amino-acid polypeptide reads, in one-letter code: Large ribosomal subunit protein bL21 (103 aa).

This sequence belongs to the bacterial ribosomal protein bL21 family. As to quaternary structure, part of the 50S ribosomal subunit. Contacts protein L20.

Functionally, this protein binds to 23S rRNA in the presence of protein L20. The polypeptide is Large ribosomal subunit protein bL21 (Desulfotalea psychrophila (strain LSv54 / DSM 12343)).